Consider the following 610-residue polypeptide: Estrogen receptor beta-2 (610 aa).

The modulating stretch occupies residues 1–170; sequence MSSSTGPAPA…GILGKGDTHF (170 aa). NR C4-type zinc fingers lie at residues 171–191 and 207–231; these read CAVC…CEGC and CPAT…LRKC. Residues 171–236 constitute a DNA-binding region (nuclear receptor); sequence CAVCHDYASG…RLRKCYEVGM (66 aa). In terms of domain architecture, NR LBD spans 302-538; that stretch reads SPEQLVNCIL…DLLLEMLDAN (237 aa). The tract at residues 566-596 is disordered; it reads HTSKQQPALKESNQDTRHSPQAEGTVDKTLH. Basic and acidic residues predominate over residues 577-596; it reads SNQDTRHSPQAEGTVDKTLH.

Belongs to the nuclear hormone receptor family. NR3 subfamily. Binds DNA as a homodimer. Can form a heterodimer with ER-alpha. In terms of tissue distribution, predominantly expressed in pituitary, telencephalon and hypothalamus as well as in the liver.

It localises to the nucleus. Its function is as follows. Binds estrogens with an affinity similar to that of ER-alpha, and activates expression of reporter genes containing estrogen response elements (ERE) in an estrogen-dependent manner. The sequence is that of Estrogen receptor beta-2 (esr2b) from Carassius auratus (Goldfish).